Consider the following 558-residue polypeptide: Dihydroxy-acid dehydratase (558 aa).

C50 contacts [2Fe-2S] cluster. D82 is a binding site for Mg(2+). Residue C123 coordinates [2Fe-2S] cluster. D124 and K125 together coordinate Mg(2+). Position 125 is an N6-carboxylysine (K125). C195 contacts [2Fe-2S] cluster. E447 serves as a coordination point for Mg(2+). Residue S472 is the Proton acceptor of the active site.

This sequence belongs to the IlvD/Edd family. As to quaternary structure, homodimer. [2Fe-2S] cluster is required as a cofactor. It depends on Mg(2+) as a cofactor.

The catalysed reaction is (2R)-2,3-dihydroxy-3-methylbutanoate = 3-methyl-2-oxobutanoate + H2O. The enzyme catalyses (2R,3R)-2,3-dihydroxy-3-methylpentanoate = (S)-3-methyl-2-oxopentanoate + H2O. It functions in the pathway amino-acid biosynthesis; L-isoleucine biosynthesis; L-isoleucine from 2-oxobutanoate: step 3/4. It participates in amino-acid biosynthesis; L-valine biosynthesis; L-valine from pyruvate: step 3/4. Functions in the biosynthesis of branched-chain amino acids. Catalyzes the dehydration of (2R,3R)-2,3-dihydroxy-3-methylpentanoate (2,3-dihydroxy-3-methylvalerate) into 2-oxo-3-methylpentanoate (2-oxo-3-methylvalerate) and of (2R)-2,3-dihydroxy-3-methylbutanoate (2,3-dihydroxyisovalerate) into 2-oxo-3-methylbutanoate (2-oxoisovalerate), the penultimate precursor to L-isoleucine and L-valine, respectively. The sequence is that of Dihydroxy-acid dehydratase from Saccharolobus islandicus (strain M.16.27) (Sulfolobus islandicus).